A 404-amino-acid polypeptide reads, in one-letter code: Major outer membrane porin (404 aa).

A signal peptide spans Met1–Ala22. Residues Gly85–Tyr110 are disordered. Over residues Thr89–Thr103 the composition is skewed to low complexity.

The protein belongs to the chlamydial porin (CP) (TC 1.B.2) family. As to quaternary structure, part of a disulfide cross-linked outer membrane complex (COMC) composed of the major outer membrane porin (MOMP), the small cysteine-rich protein (OmcA) and the large cysteine-rich periplasmic protein (OmcB).

The protein resides in the cell outer membrane. In elementary bodies (EBs, the infectious stage, which is able to survive outside the host cell) provides the structural integrity of the outer envelope through disulfide cross-links with the small cysteine-rich protein and the large cysteine-rich periplasmic protein. It has been described in publications as the Sarkosyl-insoluble COMC (Chlamydia outer membrane complex), and serves as the functional equivalent of peptidoglycan. Functionally, permits diffusion of specific solutes through the outer membrane. In Chlamydia muridarum, this protein is Major outer membrane porin (ompA).